We begin with the raw amino-acid sequence, 98 residues long: Bombyxin E-1 (98 aa).

The N-terminal stretch at 1 to 19 (MNRPVFLVLLLTGFLCIAA) is a signal peptide. Q20 carries the pyrrolidone carboxylic acid modification. Intrachain disulfides connect C29–C85, C41–C98, and C84–C89. The propeptide at 50–75 (SESSLASYSSRGWPWLPTPNFNKRAI) is c peptide like.

It belongs to the insulin family. As to quaternary structure, heterodimer of a B chain and an A chain linked by two disulfide bonds.

Its subcellular location is the secreted. Functionally, PTTH is a brain peptide responsible for activation of prothoracic glands to produce ecdysone in insects. This chain is Bombyxin E-1 (BBXE1), found in Bombyx mori (Silk moth).